The following is a 197-amino-acid chain: 7-methyl-GTP pyrophosphatase (197 aa).

The active-site Proton acceptor is Asp-72.

This sequence belongs to the Maf family. YceF subfamily. It depends on a divalent metal cation as a cofactor.

It localises to the cytoplasm. The enzyme catalyses N(7)-methyl-GTP + H2O = N(7)-methyl-GMP + diphosphate + H(+). Functionally, nucleoside triphosphate pyrophosphatase that hydrolyzes 7-methyl-GTP (m(7)GTP). May have a dual role in cell division arrest and in preventing the incorporation of modified nucleotides into cellular nucleic acids. The chain is 7-methyl-GTP pyrophosphatase from Bordetella avium (strain 197N).